We begin with the raw amino-acid sequence, 335 residues long: Methionine import ATP-binding protein MetN (335 aa).

The ABC transporter domain occupies 2 to 241 (IEFQRLHKSY…PKHVTTRRFV (240 aa)). Residue 38-45 (GHSGAGKS) participates in ATP binding.

The protein belongs to the ABC transporter superfamily. Methionine importer (TC 3.A.1.24) family. In terms of assembly, the complex is composed of two ATP-binding proteins (MetN), two transmembrane proteins (MetI) and a solute-binding protein (MetQ).

It is found in the cell inner membrane. The enzyme catalyses L-methionine(out) + ATP + H2O = L-methionine(in) + ADP + phosphate + H(+). It catalyses the reaction D-methionine(out) + ATP + H2O = D-methionine(in) + ADP + phosphate + H(+). In terms of biological role, part of the ABC transporter complex MetNIQ involved in methionine import. Responsible for energy coupling to the transport system. This Xanthomonas oryzae pv. oryzae (strain MAFF 311018) protein is Methionine import ATP-binding protein MetN.